Reading from the N-terminus, the 356-residue chain is Homoserine O-succinyltransferase (356 aa).

C146 (acyl-thioester intermediate) is an active-site residue. Residues K167 and S196 each coordinate substrate. H239 (proton acceptor) is an active-site residue. The active site involves E241. Residue R253 coordinates substrate.

The protein belongs to the MetA family.

It localises to the cytoplasm. It carries out the reaction L-homoserine + succinyl-CoA = O-succinyl-L-homoserine + CoA. Its pathway is amino-acid biosynthesis; L-methionine biosynthesis via de novo pathway; O-succinyl-L-homoserine from L-homoserine: step 1/1. Its function is as follows. Transfers a succinyl group from succinyl-CoA to L-homoserine, forming succinyl-L-homoserine. This Thioalkalivibrio nitratireducens (strain DSM 14787 / UNIQEM 213 / ALEN2) protein is Homoserine O-succinyltransferase.